The chain runs to 285 residues: Golgi phosphoprotein 3-like (285 aa).

The disordered stretch occupies residues 1 to 39; sequence MTTLTHRARRTEVGKNSEKKVESEENVNQDRNQDNEDIG. A compositionally biased stretch (basic and acidic residues) spans 10–23; the sequence is RTEVGKNSEKKVES. A 1,2-diacyl-sn-glycero-3-phospho-(1D-myo-inositol 4-phosphate) contacts are provided by W67 and R76. S112 is modified (phosphoserine). Positions 157 and 160 each coordinate a 1,2-diacyl-sn-glycero-3-phospho-(1D-myo-inositol 4-phosphate). The segment at 176 to 187 is beta-hairpin required for oligomerization; sequence EKQNFLLFDMTT.

Belongs to the GOLPH3/VPS74 family. As to quaternary structure, homooligomer. Does not interact MYO18; differs from GOLPH3 by its inability to interact with MYO18. May interact with ARF1.

The protein localises to the golgi apparatus. Its subcellular location is the golgi stack membrane. The protein resides in the trans-Golgi network membrane. Functionally, phosphatidylinositol-4-phosphate-binding protein that may antagonize the action of GOLPH3 which is required for the process of vesicle budding at the Golgi and anterograde transport to the plasma membrane. This chain is Golgi phosphoprotein 3-like (GOLPH3L), found in Bos taurus (Bovine).